The sequence spans 674 residues: CLK4-associating serine/arginine rich protein (674 aa).

Serine 101 is subject to Phosphoserine. Disordered stretches follow at residues 171–232 (TVAE…GMAD) and 258–674 (EKAM…HYRH). Residues 182 to 214 (PEEEESAAEEESNSDEDEVIPDIDVEVDVDELN) are compositionally biased toward acidic residues. A compositionally biased stretch (basic residues) spans 265–283 (RRSRRQRREFREKRLRGRK). A phosphoserine mark is found at serine 285 and serine 294. The segment covering 290–313 (ARRDSPTYDPYKRSPSESSSESRS) has biased composition (basic and acidic residues). Threonine 327 carries the post-translational modification Phosphothreonine. Phosphoserine occurs at positions 331 and 335. Residues 356–365 (PPAPPQPGGP) show a composition bias toward pro residues. Residues 378–399 (SSSSSSSSASRTSSSRSSSRSS) are compositionally biased toward low complexity. Composition is skewed to basic residues over residues 411 to 443 (SGRH…RRHS) and 481 to 492 (RGGRGLRHHSSS). Low complexity-rich tracts occupy residues 493–506 (RSRS…SRSR) and 514–532 (HSPS…SQSP). The residue at position 547 (serine 547) is a Phosphoserine. The residue at position 573 (threonine 573) is a Phosphothreonine. A coiled-coil region spans residues 585–647 (ALNRQFKADK…ERQYSRQSRS (63 aa)). Composition is skewed to basic and acidic residues over residues 590-617 (FKAD…ELRA) and 625-641 (KERE…ERQY). A compositionally biased stretch (low complexity) spans 642-651 (SRQSRSPSPR). Positions 659–674 (SRRRSRSRSRSPHYRH) are enriched in basic residues.

The protein belongs to the splicing factor SR family. As to quaternary structure, probably interacts with CLK4. Post-translationally, phosphorylated in vitro by CLK4.

It localises to the nucleus. Probably functions as an alternative splicing regulator. May regulate the mRNA splicing of genes such as CLK1. May act by regulating members of the CLK kinase family. The sequence is that of CLK4-associating serine/arginine rich protein (CLASRP) from Homo sapiens (Human).